Reading from the N-terminus, the 482-residue chain is Rhamnulokinase (482 aa).

Position 13-17 (13-17) interacts with ATP; that stretch reads ASSGR. Substrate contacts are provided by residues Gly83 and 232–234; that span reads HDT. Asp233 serves as the catalytic Proton acceptor. Position 255 (Thr255) interacts with ATP. Residue Asn292 participates in substrate binding. Position 300 (Asn300) interacts with ATP. A disulfide bond links Cys349 and Cys366. Position 398 (Gly398) interacts with ATP. Cys409 and Cys413 are oxidised to a cystine.

The protein belongs to the rhamnulokinase family. Mg(2+) serves as cofactor.

The enzyme catalyses L-rhamnulose + ATP = L-rhamnulose 1-phosphate + ADP + H(+). It participates in carbohydrate degradation; L-rhamnose degradation; glycerone phosphate from L-rhamnose: step 2/3. Functionally, involved in the catabolism of L-rhamnose (6-deoxy-L-mannose). Catalyzes the transfer of the gamma-phosphate group from ATP to the 1-hydroxyl group of L-rhamnulose to yield L-rhamnulose 1-phosphate. The protein is Rhamnulokinase of Mannheimia succiniciproducens (strain KCTC 0769BP / MBEL55E).